A 496-amino-acid chain; its full sequence is Isocitrate dehydrogenase [NADP] (496 aa).

Residues Leu88 and Thr90 each contribute to the NADP(+) site. D-threo-isocitrate is bound by residues Ser98, Asn100, Arg104, Arg114, and Arg137. The NADP(+) site is built by Asn193, Gln229, and Lys232. Residue Asp248 coordinates Mg(2+). The NADP(+) site is built by Glu277, Gly281, Ser282, Ala283, Lys285, Tyr286, and Asn293.

It belongs to the isocitrate and isopropylmalate dehydrogenases family. As to quaternary structure, homodimer. Mg(2+) serves as cofactor. The cofactor is Mn(2+).

It carries out the reaction D-threo-isocitrate + NADP(+) = 2-oxoglutarate + CO2 + NADPH. Functionally, catalyzes the oxidative decarboxylation of isocitrate to 2-oxoglutarate and carbon dioxide with the concomitant reduction of NADP(+). The sequence is that of Isocitrate dehydrogenase [NADP] (icd) from Thermus thermophilus (strain ATCC 27634 / DSM 579 / HB8).